Here is a 453-residue protein sequence, read N- to C-terminus: tRNA hydroxylation protein P (453 aa).

Belongs to the peptidase U32 family.

Involved in prephenate-dependent formation of 5-hydroxyuridine (ho5U) modification at position 34 in tRNAs, the first step in 5-carboxymethoxyuridine (cmo5U) biosynthesis. Involved differently in ho5U formation in each tRNA; tRNA(Leu3) and tRNA(Pro3) are major targets of TrhP. This is tRNA hydroxylation protein P from Escherichia coli (strain K12).